A 273-amino-acid chain; its full sequence is Putative peptidyl-prolyl cis-trans isomerase Cbf2 (273 aa).

An N-terminal signal peptide occupies residues 1-21 (MKKFSLVAATLIAGVVLNVNA). In terms of domain architecture, PpiC spans 131–228 (PARVQAKHIL…FGYHVILKEN (98 aa)).

The enzyme catalyses [protein]-peptidylproline (omega=180) = [protein]-peptidylproline (omega=0). This chain is Putative peptidyl-prolyl cis-trans isomerase Cbf2 (cbf2), found in Campylobacter jejuni subsp. jejuni serotype O:2 (strain ATCC 700819 / NCTC 11168).